Consider the following 906-residue polypeptide: Putative disease resistance protein At1g59780 (906 aa).

Residues 20-59 (KLLSQEYERFQGVEEQITELRDDLKMLMAFLSDADAKKQT) adopt a coiled-coil conformation. One can recognise an NB-ARC domain in the interval 138 to 452 (SHAQLERKRE…AEGITYPGNY (315 aa)). 187–194 (GLGGLGKT) provides a ligand contact to ATP. LRR repeat units follow at residues 572 to 597 (LPLL…IGKL), 599 to 619 (HLKY…SLRN), 620 to 644 (LKSL…VFKE), and 825 to 850 (MPLL…RFIS).

Belongs to the disease resistance NB-LRR family.

In terms of biological role, potential disease resistance protein. The protein is Putative disease resistance protein At1g59780 of Arabidopsis thaliana (Mouse-ear cress).